Here is a 267-residue protein sequence, read N- to C-terminus: Ribosomal RNA small subunit methyltransferase A (267 aa).

Residues N18, L20, G45, E66, D91, and N112 each coordinate S-adenosyl-L-methionine.

It belongs to the class I-like SAM-binding methyltransferase superfamily. rRNA adenine N(6)-methyltransferase family. RsmA subfamily.

The protein localises to the cytoplasm. It carries out the reaction adenosine(1518)/adenosine(1519) in 16S rRNA + 4 S-adenosyl-L-methionine = N(6)-dimethyladenosine(1518)/N(6)-dimethyladenosine(1519) in 16S rRNA + 4 S-adenosyl-L-homocysteine + 4 H(+). In terms of biological role, specifically dimethylates two adjacent adenosines (A1518 and A1519) in the loop of a conserved hairpin near the 3'-end of 16S rRNA in the 30S particle. May play a critical role in biogenesis of 30S subunits. The protein is Ribosomal RNA small subunit methyltransferase A of Shewanella denitrificans (strain OS217 / ATCC BAA-1090 / DSM 15013).